The following is a 171-amino-acid chain: Co-chaperone protein HscB homolog (171 aa).

Residues 2 to 74 enclose the J domain; it reads NHFELFRLPF…ISRAEYMLSE (73 aa).

It belongs to the HscB family. In terms of assembly, interacts with HscA and stimulates its ATPase activity.

In terms of biological role, co-chaperone involved in the maturation of iron-sulfur cluster-containing proteins. Seems to help targeting proteins to be folded toward HscA. The protein is Co-chaperone protein HscB homolog of Photobacterium profundum (strain SS9).